The sequence spans 411 residues: 2-acylphloroglucinol 4-prenyltransferase, chloroplastic (411 aa).

The N-terminal 91 residues, Met1–Arg91, are a transit peptide targeting the chloroplast. Helical transmembrane passes span Leu159 to Phe179, Ile198 to Ile218, Leu226 to Phe246, Ile253 to Ala273, Leu278 to Met298, Leu333 to Trp353, Ala356 to Gln376, and Lys391 to Ile411.

Belongs to the UbiA prenyltransferase family. It depends on Mg(2+) as a cofactor. Expressed in glandular trichomes called lupulin glands, and in early stage and mature cones. Detected in leaves, but not in root, stem and first stage of flowers. No expression in male flowers.

It is found in the plastid. The protein localises to the chloroplast membrane. The enzyme catalyses a 2-acylphloroglucinol + dimethylallyl diphosphate = a 2-acyl-4-prenylphloroglucinol + diphosphate. Its pathway is secondary metabolite biosynthesis. In terms of biological role, involved in the biosynthesis of prenylated phenolics natural products which contribute to the bitter taste of beer and display broad biological activities. Catalyzes the first prenylation step in the beta-bitter acid pathway. Abble to transfer dimethylallyl diphosphate (DMAPP) or geranyl diphosphate (GPP) to phlorisovalerophenone (PIVP), phlorisobutrylphenone (PIMP) and naringenin chalcone. Can also use phlorisobutyrophenone (PIBP) and phlormethylbutanophenone (PMBP) as substrates, but not 6'-O-methylated chalcone or naringenin. The protein is 2-acylphloroglucinol 4-prenyltransferase, chloroplastic of Humulus lupulus (European hop).